The following is a 49-amino-acid chain: SPbeta prophage-derived uncharacterized protein YorN (49 aa).

This Bacillus subtilis (strain 168) protein is SPbeta prophage-derived uncharacterized protein YorN (yorN).